Consider the following 621-residue polypeptide: Glutathione-regulated potassium-efflux system protein KefC (621 aa).

Helical transmembrane passes span 4-24, 26-46, 54-74, 90-110, 114-134, 151-171, 178-198, 218-238, 270-290, 294-314, 327-347, and 359-379; these read HTLI…PVAV, LGLG…PWGF, SILH…GLEL, GALQ…LLGM, VAEL…MQAM, VLLF…LLAV, LGAF…VILL, VFSA…EEAG, GLLL…GTLV, LRIL…LWLI, WFAV…GAAQ, and ALTL…VLLT. The region spanning 399–518 is the RCK N-terminal domain; it reads QPRVIIAGFG…AGVETPERET (120 aa). Residues 591–621 are disordered; the sequence is LSLTQRHGWQGTEEGKHTGDPRDEPESKPTV. Over residues 603–621 the composition is skewed to basic and acidic residues; it reads EEGKHTGDPRDEPESKPTV.

This sequence belongs to the monovalent cation:proton antiporter 2 (CPA2) transporter (TC 2.A.37) family. KefC subfamily. As to quaternary structure, homodimer. Interacts with the regulatory subunit KefF.

It is found in the cell inner membrane. Pore-forming subunit of a potassium efflux system that confers protection against electrophiles. Catalyzes K(+)/H(+) antiport. The sequence is that of Glutathione-regulated potassium-efflux system protein KefC from Enterobacter sp. (strain 638).